We begin with the raw amino-acid sequence, 129 residues long: Small ribosomal subunit protein uS11 (129 aa).

This sequence belongs to the universal ribosomal protein uS11 family. As to quaternary structure, part of the 30S ribosomal subunit. Interacts with proteins S7 and S18. Binds to IF-3.

Its function is as follows. Located on the platform of the 30S subunit, it bridges several disparate RNA helices of the 16S rRNA. Forms part of the Shine-Dalgarno cleft in the 70S ribosome. This Tolumonas auensis (strain DSM 9187 / NBRC 110442 / TA 4) protein is Small ribosomal subunit protein uS11.